Consider the following 116-residue polypeptide: CDKN2AIP N-terminal-like protein (116 aa).

M1 carries the post-translational modification N-acetylmethionine. One can recognise an XRN2-binding (XTBD) domain in the interval 24–116; sequence AEQFRSYSES…RSELMKKHQS (93 aa).

Belongs to the CARF family. In terms of assembly, interacts with XRN2; the interaction is direct.

This Rattus norvegicus (Rat) protein is CDKN2AIP N-terminal-like protein (Cdkn2aipnl).